We begin with the raw amino-acid sequence, 178 residues long: Transmembrane protein 196 (178 aa).

Helical transmembrane passes span 11–31, 47–67, 73–93, and 106–126; these read LLVL…VGAV, SSPV…ILCA, LVMI…ILNF, and LYPL…GCTL.

In terms of tissue distribution, expression is significantly decreased in lung cancer cells compared to normal lung tissue (at protein level).

The protein localises to the cytoplasm. Its subcellular location is the membrane. Its function is as follows. Acts as a tumor suppressor in lung cancer. Inhibits tumor cell growth by inhibiting cell proliferation and migration and promoting cell apoptosis. Inhibits metastasis of lung cancer by suppressing beta-catenin expression in the Wnt/beta-catenin signaling pathway. The sequence is that of Transmembrane protein 196 (TMEM196) from Homo sapiens (Human).